The primary structure comprises 631 residues: Occlusion-derived virus envelope protein E66 (631 aa).

This sequence belongs to the baculoviridae E66 family.

The protein localises to the virion membrane. Functionally, component of the polyhedra envelope. The sequence is that of Occlusion-derived virus envelope protein E66 from Leucania separata nucleopolyhedrovirus (LsNPV).